The chain runs to 245 residues: Probable transcriptional regulatory protein MAG6590 (245 aa).

It belongs to the TACO1 family.

The protein localises to the cytoplasm. This Mycoplasmopsis agalactiae (strain NCTC 10123 / CIP 59.7 / PG2) (Mycoplasma agalactiae) protein is Probable transcriptional regulatory protein MAG6590.